Consider the following 472-residue polypeptide: MSNMEQDRWSRVKGRLRSSVGEDVYSSWFARMDLESVHDESVHLSVPTRFLKSWIQTHYSDKVLSCWQAELPEVNRVDLTVRSPVRCAAPAKEAPAPVESRRDEQRPSAERSNGATPVSANHDALGGSPLDPRLTFASFVVGRSNTLAHAAAKQVAEGRRGDPVMFNPLYIHSGVGLGKTHLLQAVTWAGNAGTERKVLYLTAEKFMYGFVAALKTQTSLAFKEALRGIDVLVIDDLQFLQGKTTQAEFCHTLNALIDAGRQVVVAADRPPADLESLDERVRSRLAGGLVVEMAPLGEDLRLGILRSRVVAARTHHASFDVPQPVLEYLARTITHNGRDLEGAINRLLAHSKLNNQPVTLEMAEHEVRDLIRPSEPKRIKIEDIQRIVARQYNVSRSDLLSSRRTANVVRPRQVAMYLAKTLTLRSLPEIGRRFGGRDHTTVLHAVRKIEGLVSKDTTLSDEVESLKRQLQE.

Residues 1-73 are domain I, interacts with DnaA modulators; the sequence is MSNMEQDRWS…LSCWQAELPE (73 aa). The interval 73–128 is domain II; it reads EVNRVDLTVRSPVRCAAPAKEAPAPVESRRDEQRPSAERSNGATPVSANHDALGGS. Positions 89–124 are disordered; the sequence is APAKEAPAPVESRRDEQRPSAERSNGATPVSANHDA. Basic and acidic residues predominate over residues 99-109; that stretch reads ESRRDEQRPSA. The span at 110–119 shows a compositional bias: polar residues; it reads ERSNGATPVS. The interval 129-351 is domain III, AAA+ region; the sequence is PLDPRLTFAS…GAINRLLAHS (223 aa). Glycine 176, glycine 178, lysine 179, and threonine 180 together coordinate ATP. The tract at residues 352–472 is domain IV, binds dsDNA; the sequence is KLNNQPVTLE…VESLKRQLQE (121 aa).

The protein belongs to the DnaA family. In terms of assembly, oligomerizes as a right-handed, spiral filament on DNA at oriC.

Its subcellular location is the cytoplasm. Plays an essential role in the initiation and regulation of chromosomal replication. ATP-DnaA binds to the origin of replication (oriC) to initiate formation of the DNA replication initiation complex once per cell cycle. Binds the DnaA box (a 9 base pair repeat at the origin) and separates the double-stranded (ds)DNA. Forms a right-handed helical filament on oriC DNA; dsDNA binds to the exterior of the filament while single-stranded (ss)DNA is stabiized in the filament's interior. The ATP-DnaA-oriC complex binds and stabilizes one strand of the AT-rich DNA unwinding element (DUE), permitting loading of DNA polymerase. After initiation quickly degrades to an ADP-DnaA complex that is not apt for DNA replication. Binds acidic phospholipids. The chain is Chromosomal replication initiator protein DnaA from Rhodopseudomonas palustris (strain TIE-1).